We begin with the raw amino-acid sequence, 272 residues long: Eukaryotic translation initiation factor 3 subunit G (272 aa).

Disordered stretches follow at residues 1-28 (MPAL…PTEI) and 143-187 (AGKA…RGRD). Positions 190–268 (TAIRISNLSE…LILNVEWSKP (79 aa)) constitute an RRM domain.

This sequence belongs to the eIF-3 subunit G family. As to quaternary structure, component of the eukaryotic translation initiation factor 3 (eIF-3) complex.

The protein localises to the cytoplasm. Functionally, RNA-binding component of the eukaryotic translation initiation factor 3 (eIF-3) complex, which is involved in protein synthesis of a specialized repertoire of mRNAs and, together with other initiation factors, stimulates binding of mRNA and methionyl-tRNAi to the 40S ribosome. The eIF-3 complex specifically targets and initiates translation of a subset of mRNAs involved in cell proliferation. This subunit can bind 18S rRNA. In Culex quinquefasciatus (Southern house mosquito), this protein is Eukaryotic translation initiation factor 3 subunit G.